The chain runs to 394 residues: NAD(P)H-quinone oxidoreductase subunit H (394 aa).

The protein belongs to the complex I 49 kDa subunit family. In terms of assembly, NDH-1 can be composed of about 15 different subunits; different subcomplexes with different compositions have been identified which probably have different functions.

It localises to the cellular thylakoid membrane. It carries out the reaction a plastoquinone + NADH + (n+1) H(+)(in) = a plastoquinol + NAD(+) + n H(+)(out). It catalyses the reaction a plastoquinone + NADPH + (n+1) H(+)(in) = a plastoquinol + NADP(+) + n H(+)(out). Its function is as follows. NDH-1 shuttles electrons from an unknown electron donor, via FMN and iron-sulfur (Fe-S) centers, to quinones in the respiratory and/or the photosynthetic chain. The immediate electron acceptor for the enzyme in this species is believed to be plastoquinone. Couples the redox reaction to proton translocation, and thus conserves the redox energy in a proton gradient. Cyanobacterial NDH-1 also plays a role in inorganic carbon-concentration. This is NAD(P)H-quinone oxidoreductase subunit H from Picosynechococcus sp. (strain ATCC 27264 / PCC 7002 / PR-6) (Agmenellum quadruplicatum).